Consider the following 491-residue polypeptide: Ketol-acid reductoisomerase (NADP(+)) (491 aa).

The KARI N-terminal Rossmann domain occupies 15–208 (AQLGKCRFMG…GGHRAGVLES (194 aa)). Residues 45–48 (CGAQ), arginine 68, arginine 76, serine 78, and 108–110 (DKQ) each bind NADP(+). Histidine 132 is a catalytic residue. Glycine 158 is a binding site for NADP(+). KARI C-terminal knotted domains are found at residues 209 to 344 (SFVA…TAPQ) and 345 to 484 (YEGK…MTDM). Aspartate 217, glutamate 221, glutamate 389, and glutamate 393 together coordinate Mg(2+). Serine 414 serves as a coordination point for substrate.

It belongs to the ketol-acid reductoisomerase family. Mg(2+) is required as a cofactor.

The enzyme catalyses (2R)-2,3-dihydroxy-3-methylbutanoate + NADP(+) = (2S)-2-acetolactate + NADPH + H(+). The catalysed reaction is (2R,3R)-2,3-dihydroxy-3-methylpentanoate + NADP(+) = (S)-2-ethyl-2-hydroxy-3-oxobutanoate + NADPH + H(+). Its pathway is amino-acid biosynthesis; L-isoleucine biosynthesis; L-isoleucine from 2-oxobutanoate: step 2/4. It participates in amino-acid biosynthesis; L-valine biosynthesis; L-valine from pyruvate: step 2/4. In terms of biological role, involved in the biosynthesis of branched-chain amino acids (BCAA). Catalyzes an alkyl-migration followed by a ketol-acid reduction of (S)-2-acetolactate (S2AL) to yield (R)-2,3-dihydroxy-isovalerate. In the isomerase reaction, S2AL is rearranged via a Mg-dependent methyl migration to produce 3-hydroxy-3-methyl-2-ketobutyrate (HMKB). In the reductase reaction, this 2-ketoacid undergoes a metal-dependent reduction by NADPH to yield (R)-2,3-dihydroxy-isovalerate. The protein is Ketol-acid reductoisomerase (NADP(+)) of Escherichia coli (strain UTI89 / UPEC).